Here is a 154-residue protein sequence, read N- to C-terminus: Lipoprotein signal peptidase (154 aa).

3 helical membrane passes run 4 to 24 (IIIP…KLWI), 62 to 82 (LFTL…MKHI), and 84 to 104 (GSYW…GNFI). Catalysis depends on residues aspartate 114 and aspartate 130. Residues 125–145 (IFNVADSYLTIGIICLMIALW) form a helical membrane-spanning segment.

This sequence belongs to the peptidase A8 family.

It localises to the cell membrane. The catalysed reaction is Release of signal peptides from bacterial membrane prolipoproteins. Hydrolyzes -Xaa-Yaa-Zaa-|-(S,diacylglyceryl)Cys-, in which Xaa is hydrophobic (preferably Leu), and Yaa (Ala or Ser) and Zaa (Gly or Ala) have small, neutral side chains.. It functions in the pathway protein modification; lipoprotein biosynthesis (signal peptide cleavage). This protein specifically catalyzes the removal of signal peptides from prolipoproteins. The protein is Lipoprotein signal peptidase of Streptococcus agalactiae serotype Ia (strain ATCC 27591 / A909 / CDC SS700).